The primary structure comprises 532 residues: Fatty aldehyde dehydrogenase HFD1 (532 aa).

Serine 111 is modified (phosphoserine). A helical transmembrane segment spans residues 134 to 152 (IIAPFNFPLLLAFAPLAAA). 214 to 219 (GSPRVG) provides a ligand contact to NAD(+). Active-site residues include glutamate 236 and cysteine 273.

Belongs to the aldehyde dehydrogenase family.

The protein localises to the lipid droplet. The protein resides in the mitochondrion outer membrane. It localises to the endosome membrane. Its subcellular location is the cytoplasmic granule membrane. It catalyses the reaction an aldehyde + NAD(+) + H2O = a carboxylate + NADH + 2 H(+). The enzyme catalyses hexadecanoate + NADH + 2 H(+) = hexadecanal + NAD(+) + H2O. The catalysed reaction is 4-hydroxybenzaldehyde + NAD(+) + H2O = 4-hydroxybenzoate + NADH + 2 H(+). In terms of biological role, catalyzes the oxidation of long-chain aliphatic aldehydes to fatty acids. Responsible for conversion of the sphingosine 1-phosphate (S1P) degradation product hexadecenal to hexadecenoic acid. Involved in coenzyme Q (CoQ) biosynthesis, catalyzing the last step in the tyrosine to 4-hydroxybenzoate (4-HB) pathway. Oxidizes 4-hydroxybenzaldehyde (4-Hbz) to 4-HB, the aromatic precursor for coenzyme Q. In Saccharomyces cerevisiae (strain ATCC 204508 / S288c) (Baker's yeast), this protein is Fatty aldehyde dehydrogenase HFD1 (HFD1).